Reading from the N-terminus, the 167-residue chain is ATP synthase subunit b (167 aa).

A helical transmembrane segment spans residues 15–37; that stretch reads FWQTVIFLVTLYLLSKFAWGPIM.

The protein belongs to the ATPase B chain family. As to quaternary structure, F-type ATPases have 2 components, F(1) - the catalytic core - and F(0) - the membrane proton channel. F(1) has five subunits: alpha(3), beta(3), gamma(1), delta(1), epsilon(1). F(0) has three main subunits: a(1), b(2) and c(10-14). The alpha and beta chains form an alternating ring which encloses part of the gamma chain. F(1) is attached to F(0) by a central stalk formed by the gamma and epsilon chains, while a peripheral stalk is formed by the delta and b chains.

The protein localises to the cell inner membrane. F(1)F(0) ATP synthase produces ATP from ADP in the presence of a proton or sodium gradient. F-type ATPases consist of two structural domains, F(1) containing the extramembraneous catalytic core and F(0) containing the membrane proton channel, linked together by a central stalk and a peripheral stalk. During catalysis, ATP synthesis in the catalytic domain of F(1) is coupled via a rotary mechanism of the central stalk subunits to proton translocation. In terms of biological role, component of the F(0) channel, it forms part of the peripheral stalk, linking F(1) to F(0). The polypeptide is ATP synthase subunit b (Cytophaga hutchinsonii (strain ATCC 33406 / DSM 1761 / CIP 103989 / NBRC 15051 / NCIMB 9469 / D465)).